Consider the following 451-residue polypeptide: Tubulin alpha-1 chain (451 aa).

Glutamine 11 is a binding site for GTP. The residue at position 40 (lysine 40) is an N6-acetyllysine. Glutamate 71, glycine 144, threonine 145, threonine 179, asparagine 206, and asparagine 228 together coordinate GTP. Glutamate 71 serves as a coordination point for Mg(2+). Residue glutamate 254 is part of the active site.

It belongs to the tubulin family. In terms of assembly, dimer of alpha and beta chains. A typical microtubule is a hollow water-filled tube with an outer diameter of 25 nm and an inner diameter of 15 nM. Alpha-beta heterodimers associate head-to-tail to form protofilaments running lengthwise along the microtubule wall with the beta-tubulin subunit facing the microtubule plus end conferring a structural polarity. Microtubules usually have 13 protofilaments but different protofilament numbers can be found in some organisms and specialized cells. Mg(2+) is required as a cofactor. Undergoes a tyrosination/detyrosination cycle, the cyclic removal and re-addition of a C-terminal tyrosine residue by the enzymes tubulin tyrosine carboxypeptidase (TTCP) and tubulin tyrosine ligase (TTL), respectively. Post-translationally, acetylation of alpha chains at Lys-40 stabilizes microtubules and affects affinity and processivity of microtubule motors. This modification has a role in multiple cellular functions, ranging from cell motility, cell cycle progression or cell differentiation to intracellular trafficking and signaling.

The protein localises to the cytoplasm. It localises to the cytoskeleton. The catalysed reaction is GTP + H2O = GDP + phosphate + H(+). Its function is as follows. Tubulin is the major constituent of microtubules, a cylinder consisting of laterally associated linear protofilaments composed of alpha- and beta-tubulin heterodimers. Microtubules grow by the addition of GTP-tubulin dimers to the microtubule end, where a stabilizing cap forms. Below the cap, tubulin dimers are in GDP-bound state, owing to GTPase activity of alpha-tubulin. The polypeptide is Tubulin alpha-1 chain (TUBA1) (Eleusine indica (Goosegrass)).